A 1921-amino-acid chain; its full sequence is Endoribonuclease Dicer (1921 aa).

Residues 51 to 227 (LLEAALDHNT…ELEEKIKKLE (177 aa)) form the Helicase ATP-binding domain. 64–71 (LNTGSGKT) contributes to the ATP binding site. The DECH box signature appears at 175–178 (DECH). The interval 409 to 433 (YVSWSDSEDDDEDEEIEEKEKPETN) is disordered. Residues 414-425 (DSEDDDEDEEIE) show a composition bias toward acidic residues. Positions 433–602 (NFPSPFTNIL…SVDTSETETE (170 aa)) constitute a Helicase C-terminal domain. A Dicer dsRNA-binding fold domain is found at 630-722 (AIGHINRYCA…MPVGKETVKY (93 aa)). The disordered stretch occupies residues 727–746 (DLHDEEETSVPGRPGSTKRR). Positions 895–1042 (KFMEDIEKSE…LVPELCAIHP (148 aa)) constitute a PAZ domain. A disordered region spans residues 1270–1289 (NLSKDKVDSEKNTSSGYSSK). RNase III domains lie at 1277–1404 (DSEK…EETT) and 1665–1823 (FENF…MDSG). Residues Glu-1317, Asp-1396, Glu-1399, and Glu-1704 each contribute to the Mg(2+) site. The disordered stretch occupies residues 1782–1801 (QGMDSELRRSEEDEEKEEDI). 2 residues coordinate Mg(2+): Asp-1809 and Glu-1812. One can recognise a DRBM domain in the interval 1848-1913 (VPRSPVRELL…ARRALRSLKA (66 aa)).

It belongs to the helicase family. Dicer subfamily. As to quaternary structure, component of the RISC loading complex (RLC), or micro-RNA (miRNA) loading complex (miRLC), which is composed of DICER1, AGO2 and TARBP2; DICER1 and TARBP2 are required to process precursor miRNAs (pre-miRNAs) to mature miRNAs and then load them onto AGO2. Note that the trimeric RLC/miRLC is also referred to as RISC. Requires Mg(2+) as cofactor. Mn(2+) serves as cofactor.

The protein resides in the cytoplasm. The enzyme catalyses Endonucleolytic cleavage to 5'-phosphomonoester.. In terms of biological role, double-stranded RNA (dsRNA) endoribonuclease playing a central role in short dsRNA-mediated post-transcriptional gene silencing. Cleaves naturally occurring long dsRNAs and short hairpin pre-microRNAs (miRNA) into fragments of twenty-one to twenty-three nucleotides with 3' overhang of two nucleotides, producing respectively short interfering RNAs (siRNA) and mature microRNAs. SiRNAs and miRNAs serve as guide to direct the RNA-induced silencing complex (RISC) to complementary RNAs to degrade them or prevent their translation. Gene silencing mediated by siRNAs, also called RNA interference, controls the elimination of transcripts from mobile and repetitive DNA elements of the genome but also the degradation of exogenous RNA of viral origin for instance. The miRNA pathway on the other side is a mean to specifically regulate the expression of target genes. The chain is Endoribonuclease Dicer (DICER1) from Gallus gallus (Chicken).